The primary structure comprises 364 residues: Phosphoserine aminotransferase (364 aa).

R46 is a binding site for L-glutamate. Residues 80–81 (AR), W106, T157, D176, and Q199 each bind pyridoxal 5'-phosphate. K200 carries the N6-(pyridoxal phosphate)lysine modification. 241 to 242 (NT) contributes to the pyridoxal 5'-phosphate binding site.

This sequence belongs to the class-V pyridoxal-phosphate-dependent aminotransferase family. SerC subfamily. In terms of assembly, homodimer. The cofactor is pyridoxal 5'-phosphate.

Its subcellular location is the cytoplasm. The enzyme catalyses O-phospho-L-serine + 2-oxoglutarate = 3-phosphooxypyruvate + L-glutamate. The catalysed reaction is 4-(phosphooxy)-L-threonine + 2-oxoglutarate = (R)-3-hydroxy-2-oxo-4-phosphooxybutanoate + L-glutamate. It functions in the pathway amino-acid biosynthesis; L-serine biosynthesis; L-serine from 3-phospho-D-glycerate: step 2/3. The protein operates within cofactor biosynthesis; pyridoxine 5'-phosphate biosynthesis; pyridoxine 5'-phosphate from D-erythrose 4-phosphate: step 3/5. Catalyzes the reversible conversion of 3-phosphohydroxypyruvate to phosphoserine and of 3-hydroxy-2-oxo-4-phosphonooxybutanoate to phosphohydroxythreonine. This is Phosphoserine aminotransferase from Vibrio vulnificus (strain CMCP6).